The following is a 273-amino-acid chain: Cysteine protease S273R (273 aa).

Active-site residues include His-168 and Asn-187. Position 226 (Gln-226) interacts with substrate. The active-site Nucleophile is Cys-232.

Belongs to the peptidase C63 family.

Its subcellular location is the host cytoplasm. The protein localises to the virion. Its function is as follows. Cysteine protease that plays several role during infection including processing of the structural polyprotein or inhibition of the host immune response. Catalyzes the maturation of the pp220 and pp62 polyprotein precursors into core-shell proteins. Plays a role in the disruption of host pyroptosis via specific cleavage of gasdermin D/GSDMD. In addition, strongly decreases the host cGAS-STING signaling by targeting IKBKE via its enzymatic activity. Also impairs host FOXJ1-mediated antiviral effect via degradation of FOXJ1. This chain is Cysteine protease S273R, found in African swine fever virus (isolate Tick/Malawi/Lil 20-1/1983) (ASFV).